A 215-amino-acid chain; its full sequence is Large ribosomal subunit protein bL25 (215 aa).

Residues 192 to 202 (EEEEVEEEVAE) are compositionally biased toward acidic residues. The interval 192-215 (EEEEVEEEVAEPEVIKRKEEEEEE) is disordered. The span at 204–215 (EVIKRKEEEEEE) shows a compositional bias: basic and acidic residues.

Belongs to the bacterial ribosomal protein bL25 family. CTC subfamily. As to quaternary structure, part of the 50S ribosomal subunit; part of the 5S rRNA/L5/L18/L25 subcomplex. Contacts the 5S rRNA. Binds to the 5S rRNA independently of L5 and L18.

This is one of the proteins that binds to the 5S RNA in the ribosome where it forms part of the central protuberance. The chain is Large ribosomal subunit protein bL25 from Thermotoga neapolitana (strain ATCC 49049 / DSM 4359 / NBRC 107923 / NS-E).